A 406-amino-acid polypeptide reads, in one-letter code: Secretion apparatus protein BsaZ (406 aa).

A run of 4 helical transmembrane segments spans residues 28 to 48, 80 to 100, 137 to 157, and 175 to 195; these read IVAL…VDLT, IAAP…LVQS, ALLY…LYHA, and IVLT…VLIL. The segment at 341 to 406 is disordered; sequence AANRGGPPPE…APARTGDQNA (66 aa). Positions 370 to 399 are enriched in low complexity; it reads DACADNAFPDDAPPGAAAPNAGSPDGGAPA.

This sequence belongs to the type III secretion exporter family.

The protein localises to the cell membrane. Part of the bsa type III secretion system, is involved in the intracellular replication of invading bacteria inside the host cell. Probably necessary for the lysis of the vacuole membrane and escape into the host cell cytoplasm. The polypeptide is Secretion apparatus protein BsaZ (bsaZ) (Burkholderia pseudomallei (strain 668)).